The sequence spans 190 residues: Glutathione peroxidase 2 (190 aa).

Selenocysteine 40 is an active-site residue. Position 40 (selenocysteine 40) is a non-standard amino acid, selenocysteine.

The protein belongs to the glutathione peroxidase family. Homotetramer.

It localises to the cytoplasm. The protein resides in the cytosol. It catalyses the reaction 2 glutathione + H2O2 = glutathione disulfide + 2 H2O. It carries out the reaction a hydroperoxy polyunsaturated fatty acid + 2 glutathione = a hydroxy polyunsaturated fatty acid + glutathione disulfide + H2O. The catalysed reaction is tert-butyl hydroperoxide + 2 glutathione = tert-butanol + glutathione disulfide + H2O. The enzyme catalyses cumene hydroperoxide + 2 glutathione = 2-phenylpropan-2-ol + glutathione disulfide + H2O. It catalyses the reaction (13S)-hydroperoxy-(9Z,11E)-octadecadienoate + 2 glutathione = (13S)-hydroxy-(9Z,11E)-octadecadienoate + glutathione disulfide + H2O. It carries out the reaction (5S)-hydroperoxy-(6E,8Z,11Z,14Z)-eicosatetraenoate + 2 glutathione = (5S)-hydroxy-(6E,8Z,11Z,14Z)-eicosatetraenoate + glutathione disulfide + H2O. The catalysed reaction is (12R)-hydroperoxy-(5Z,8Z,10E,14Z)-eicosatetraenoate + 2 glutathione = (12R)-hydroxy-(5Z,8Z,10E,14Z)-eicosatetraenoate + glutathione disulfide + H2O. The enzyme catalyses (15S)-hydroperoxy-(5Z,8Z,11Z,13E)-eicosatetraenoate + 2 glutathione = (15S)-hydroxy-(5Z,8Z,11Z,13E)-eicosatetraenoate + glutathione disulfide + H2O. Functionally, catalyzes the reduction of hydroperoxides in a glutathione-dependent manner thus regulating cellular redox homeostasis. Can reduce small soluble hydroperoxides such as H2O2, cumene hydroperoxide and tert-butyl hydroperoxide, as well as several fatty acid-derived hydroperoxides. Cannot reduce phosphatidycholine hydroperoxide. This chain is Glutathione peroxidase 2 (Gpx2), found in Mus musculus (Mouse).